The chain runs to 156 residues: Small ribosomal subunit protein uS7 (156 aa).

This sequence belongs to the universal ribosomal protein uS7 family. As to quaternary structure, part of the 30S ribosomal subunit. Contacts proteins S9 and S11.

Functionally, one of the primary rRNA binding proteins, it binds directly to 16S rRNA where it nucleates assembly of the head domain of the 30S subunit. Is located at the subunit interface close to the decoding center, probably blocks exit of the E-site tRNA. The sequence is that of Small ribosomal subunit protein uS7 from Dechloromonas aromatica (strain RCB).